Consider the following 557-residue polypeptide: Multidrug transporter FLR1 (557 aa).

N-linked (GlcNAc...) asparagine glycans are attached at residues Asn33, Asn48, and Asn106. Residues 44–57 (SESSNMSFNSGSEE) are compositionally biased toward low complexity. The segment at 44–67 (SESSNMSFNSGSEENSQEKSVEDL) is disordered. The next 8 membrane-spanning stretches (helical) occupy residues 113-133 (ALII…SSIY), 149-169 (VVGT…PIVF), 181-201 (LPVY…CALA), 204-224 (FAGL…ALST), 238-258 (LALV…LAPL), 271-291 (WIFW…TFFF), 355-375 (LYIA…PIVF), and 387-407 (GLAY…LLVF). Asn418 carries N-linked (GlcNAc...) asparagine glycosylation. 4 helical membrane passes run 426–446 (TLIL…MFGW), 450–470 (VHWI…FNIF), 484–506 (YVAS…FPLF), and 521–541 (VAWG…IPFV).

The protein belongs to the major facilitator superfamily.

The protein resides in the cell membrane. In terms of biological role, multidrug transporter that confers resistance to 5-flucytosine (5-FC) and clotrimazole. Also confers resistance to benomyl, but not 4-nitroquinoline-N-oxide, cycloheximide, or fluconazole. Plays direct roles in extrusion of 5-flucytosine and clotrimazole. In Candida glabrata (strain ATCC 2001 / BCRC 20586 / JCM 3761 / NBRC 0622 / NRRL Y-65 / CBS 138) (Yeast), this protein is Multidrug transporter FLR1.